The sequence spans 283 residues: MSKNNAVEFRHVSFTYPDTEKPVLNDINFKIRSGSWTALIGHNGSGKSTISKLTNGLLLPDADANSKIIVSGITLNSKTVWNVREKVGIVFQNPDNQFVGATVGDDVAFGLENRGVPRNEMIRIVNRVLSDVGMLDYINAEPANLSGGQKQRVAIAGILAVEPDIIILDESTSMLDPNGRNQILKIIRQLMIDKNLTIISITHDIDEASLADDVIVLNDGKILAQSGPIDIFSKPELLQEIGLDIPFVEKVILKLKETGIKVPQSIKTQDELEQYLCQLNSKK.

The 238-residue stretch at 7–244 (VEFRHVSFTY…PELLQEIGLD (238 aa)) folds into the ABC transporter domain. An ATP-binding site is contributed by 41-48 (GHNGSGKS).

It belongs to the ABC transporter superfamily. Energy-coupling factor EcfA family. As to quaternary structure, forms a stable energy-coupling factor (ECF) transporter complex composed of 2 membrane-embedded substrate-binding proteins (S component), 2 ATP-binding proteins (A component) and 2 transmembrane proteins (T component).

Its subcellular location is the cell membrane. Its function is as follows. ATP-binding (A) component of a common energy-coupling factor (ECF) ABC-transporter complex. Unlike classic ABC transporters this ECF transporter provides the energy necessary to transport a number of different substrates. The protein is Energy-coupling factor transporter ATP-binding protein EcfA1 of Lactobacillus acidophilus (strain ATCC 700396 / NCK56 / N2 / NCFM).